The sequence spans 162 residues: Fibroblast growth factor 22 (162 aa).

The first 22 residues, 1–22 (MRSRLWLGLAWLLLARAPGAPG), serve as a signal peptide directing secretion.

It belongs to the heparin-binding growth factors family. As to quaternary structure, interacts with FGFR1 and FGFR2. Interacts with FGFBP1. Preferentially expressed in skin; low expression in brain. Expressed in the inner root sheath of the hair follicle.

It is found in the secreted. Functionally, plays a role in the fasting response, glucose homeostasis, lipolysis and lipogenesis. Can stimulate cell proliferation (in vitro). May be involved in hair development. The chain is Fibroblast growth factor 22 (Fgf22) from Mus musculus (Mouse).